We begin with the raw amino-acid sequence, 336 residues long: MFYPVIKKALFQLDPERAHELTFQQLRRITNTPFEFLVRQSVPTKPVTCMGLSFKNPLGLAAGLDKDGECIDALGAMGFGFIEVGTVTPRPQSGNDKPRLFRVVEAEGLINRMGFNNKGVDYLVENVKKTRFGGVLGINIGKNKDTPVEQGKDDYLICMDKVYPHAGYIAINISSPNTPGLRSLQYGEALDDLLLAIKNKQTELKEKHQKYVPVAVKIAPDLSEEELIQIADSLVRYNIDGVIATNTTLDRKLIQGLNHCGQTGGLSGRPLQTSSTEIIRRLSQELAGRLPIIGVGGIDSLVAAREKMDAGASLVQIYSGFIFHGPRLIKDIVTHI.

Residues 62-66 (AGLDK) and Thr-86 contribute to the FMN site. Position 66 (Lys-66) interacts with substrate. 111–115 (NRMGF) lines the substrate pocket. FMN is bound by residues Asn-139 and Asn-172. Asn-172 serves as a coordination point for substrate. The Nucleophile role is filled by Ser-175. Residue Asn-177 participates in substrate binding. FMN is bound by residues Lys-217 and Thr-245. 246-247 (NT) contacts substrate. FMN contacts are provided by residues Gly-268, Gly-297, and 318-319 (YS).

It belongs to the dihydroorotate dehydrogenase family. Type 2 subfamily. As to quaternary structure, monomer. FMN serves as cofactor.

It localises to the cell membrane. It carries out the reaction (S)-dihydroorotate + a quinone = orotate + a quinol. Its pathway is pyrimidine metabolism; UMP biosynthesis via de novo pathway; orotate from (S)-dihydroorotate (quinone route): step 1/1. Catalyzes the conversion of dihydroorotate to orotate with quinone as electron acceptor. This chain is Dihydroorotate dehydrogenase (quinone), found in Pectobacterium atrosepticum (strain SCRI 1043 / ATCC BAA-672) (Erwinia carotovora subsp. atroseptica).